The following is a 563-amino-acid chain: MNIKIILLSIILIIQLLLLNNNGGIVESKINFSKRKQTDRKPNPSPKTYTKEYYDNKYLKSLKNVKQTPNDFLVTDLPGLDNGILTSFSGLLTTNETSDGNLFFWFFPANETVINPMDAPLLVWLNGGPGCSSMDSVFIETGPLRFIGDSDNSDKFYINPWSWHNSANMLYIDQPFGTGLSFVSDNDGLVTNDLEINQNFYQFIQEFFQIFSNYSTLPFFISGESYAGHYIPHMASYILNMNENLSKDSIKINLQGVAIGNGYTHPTTQINSYREFGYYATGIIGQRQYNNYENLNNLCQEQLSQGNYNSDECANVFNTLLDDSGSSNTSQVNMYDYRLNDPTAGNNWPLPGINQEFVYLNRDDVRSAIHATVTPHQWNECNDTVNGLLTNQDESSLYLFPELLSNIRVLIYNGQFDVICNHVGTTEYLNQIEWDYTQEWSDAPRFTWTSVGTDGSLQSGGYGKTAANLTFVLALGGSHMYPMNMPSTSFDMITRFLKNKSFNDLPQSIGIDAPSTPKPVPLTLGAWIGITVGGCAFGFLVGGLIIYIIMKKSSKNGYYKVIQ.

Positions 1-23 (MNIKIILLSIILIIQLLLLNNNG) are cleaved as a signal peptide. Topologically, residues 24–529 (GIVESKINFS…VPLTLGAWIG (506 aa)) are extracellular. N-linked (GlcNAc...) asparagine glycosylation is found at asparagine 31, asparagine 95, asparagine 110, and asparagine 213. Serine 225 is a catalytic residue. N-linked (GlcNAc...) asparagine glycans are attached at residues asparagine 244, asparagine 328, and asparagine 382. Aspartate 417 is a catalytic residue. Asparagine 468 carries an N-linked (GlcNAc...) asparagine glycan. The active site involves histidine 479. Asparagine 499 carries N-linked (GlcNAc...) asparagine glycosylation. A helical transmembrane segment spans residues 530–550 (ITVGGCAFGFLVGGLIIYIIM). The Cytoplasmic segment spans residues 551-563 (KKSSKNGYYKVIQ).

This sequence belongs to the peptidase S10 family.

The protein resides in the membrane. Functionally, probable carboxypeptidase. This is Serine carboxypeptidase S10 family member 2 from Dictyostelium discoideum (Social amoeba).